The following is a 618-amino-acid chain: D-glucuronyl C5-epimerase (618 aa).

Residues 1–11 are Cytoplasmic-facing; it reads MRCLAARVNYK. A helical; Signal-anchor for type II membrane protein transmembrane segment spans residues 12–29; it reads TLIIICALFTLVTVLLWN. At 30–618 the chain is on the lumenal side; the sequence is KCSSDKAIQF…YLKGSRAKHN (589 aa). Substrate is bound by residues Tyr180, 185–187, Gln202, Tyr210, Gln213, and Gln216; that span reads RDR. Ca(2+) contacts are provided by Thr238, Glu240, Thr269, Asn270, and Asp393. Substrate-binding positions include 430-433, 500-501, Asn511, Tyr515, Tyr561, Arg564, and 573-582; these read KLGE, EY, and NLARWDYHTT.

This sequence belongs to the D-glucuronyl C5-epimerase family. As to quaternary structure, homodimer. Interacts with HS2ST1. As to expression, widely expressed with highest levels in lung and lowest levels in spleen.

It localises to the golgi apparatus membrane. It catalyses the reaction [heparosan-N-sulfate](n) = [heparan-N-sulfate](n). The protein operates within glycan metabolism; heparan sulfate biosynthesis. It participates in glycan metabolism; heparin biosynthesis. Its function is as follows. Converts D-glucuronic acid residues adjacent to N-sulfate sugar residues to L-iduronic acid residues, both in maturing heparan sulfate (HS) and heparin chains. This is important for further modifications that determine the specificity of interactions between these glycosaminoglycans and proteins. This is D-glucuronyl C5-epimerase (Glce) from Mus musculus (Mouse).